Reading from the N-terminus, the 434-residue chain is Serine hydroxymethyltransferase (434 aa).

(6S)-5,6,7,8-tetrahydrofolate is bound by residues leucine 124 and 128–130 (GHL). N6-(pyridoxal phosphate)lysine is present on lysine 233. Glutamate 249 is a binding site for (6S)-5,6,7,8-tetrahydrofolate.

This sequence belongs to the SHMT family. In terms of assembly, homodimer. The cofactor is pyridoxal 5'-phosphate.

It is found in the cytoplasm. The enzyme catalyses (6R)-5,10-methylene-5,6,7,8-tetrahydrofolate + glycine + H2O = (6S)-5,6,7,8-tetrahydrofolate + L-serine. The protein operates within one-carbon metabolism; tetrahydrofolate interconversion. Its pathway is amino-acid biosynthesis; glycine biosynthesis; glycine from L-serine: step 1/1. Its function is as follows. Catalyzes the reversible interconversion of serine and glycine with tetrahydrofolate (THF) serving as the one-carbon carrier. This reaction serves as the major source of one-carbon groups required for the biosynthesis of purines, thymidylate, methionine, and other important biomolecules. Also exhibits THF-independent aldolase activity toward beta-hydroxyamino acids, producing glycine and aldehydes, via a retro-aldol mechanism. This chain is Serine hydroxymethyltransferase, found in Synechococcus sp. (strain JA-3-3Ab) (Cyanobacteria bacterium Yellowstone A-Prime).